The primary structure comprises 433 residues: 4-hydroxy-3-methylbut-2-en-1-yl diphosphate synthase (flavodoxin) (433 aa).

Positions 320, 323, 366, and 373 each coordinate [4Fe-4S] cluster.

Belongs to the IspG family. It depends on [4Fe-4S] cluster as a cofactor.

It catalyses the reaction (2E)-4-hydroxy-3-methylbut-2-enyl diphosphate + oxidized [flavodoxin] + H2O + 2 H(+) = 2-C-methyl-D-erythritol 2,4-cyclic diphosphate + reduced [flavodoxin]. The protein operates within isoprenoid biosynthesis; isopentenyl diphosphate biosynthesis via DXP pathway; isopentenyl diphosphate from 1-deoxy-D-xylulose 5-phosphate: step 5/6. In terms of biological role, converts 2C-methyl-D-erythritol 2,4-cyclodiphosphate (ME-2,4cPP) into 1-hydroxy-2-methyl-2-(E)-butenyl 4-diphosphate. The chain is 4-hydroxy-3-methylbut-2-en-1-yl diphosphate synthase (flavodoxin) from Beijerinckia indica subsp. indica (strain ATCC 9039 / DSM 1715 / NCIMB 8712).